We begin with the raw amino-acid sequence, 219 residues long: Translation initiation factor IF-3 (219 aa).

Belongs to the IF-3 family. Monomer.

Its subcellular location is the cytoplasm. Its function is as follows. IF-3 binds to the 30S ribosomal subunit and shifts the equilibrium between 70S ribosomes and their 50S and 30S subunits in favor of the free subunits, thus enhancing the availability of 30S subunits on which protein synthesis initiation begins. The protein is Translation initiation factor IF-3 of Prochlorococcus marinus (strain MIT 9303).